A 404-amino-acid chain; its full sequence is Argininosuccinate synthase (404 aa).

Residues 10–18 and alanine 38 contribute to the ATP site; that span reads AYSGGVDTS. Tyrosine 89 contacts L-citrulline. Glycine 119 contributes to the ATP binding site. Residues threonine 121, asparagine 125, and aspartate 126 each coordinate L-aspartate. Asparagine 125 is a binding site for L-citrulline. Positions 129, 177, 186, 262, and 274 each coordinate L-citrulline.

This sequence belongs to the argininosuccinate synthase family. Type 1 subfamily. As to quaternary structure, homotetramer.

Its subcellular location is the cytoplasm. It catalyses the reaction L-citrulline + L-aspartate + ATP = 2-(N(omega)-L-arginino)succinate + AMP + diphosphate + H(+). Its pathway is amino-acid biosynthesis; L-arginine biosynthesis; L-arginine from L-ornithine and carbamoyl phosphate: step 2/3. The chain is Argininosuccinate synthase from Prochlorococcus marinus (strain MIT 9301).